A 333-amino-acid polypeptide reads, in one-letter code: Phosphoribosylformylglycinamidine cyclo-ligase (333 aa).

It belongs to the AIR synthase family.

It is found in the cytoplasm. The catalysed reaction is 2-formamido-N(1)-(5-O-phospho-beta-D-ribosyl)acetamidine + ATP = 5-amino-1-(5-phospho-beta-D-ribosyl)imidazole + ADP + phosphate + H(+). The protein operates within purine metabolism; IMP biosynthesis via de novo pathway; 5-amino-1-(5-phospho-D-ribosyl)imidazole from N(2)-formyl-N(1)-(5-phospho-D-ribosyl)glycinamide: step 2/2. The sequence is that of Phosphoribosylformylglycinamidine cyclo-ligase from Methanosarcina barkeri (strain Fusaro / DSM 804).